Consider the following 600-residue polypeptide: Pyranose dehydrogenase 3 (600 aa).

The first 25 residues, 1–25, serve as a signal peptide directing secretion; sequence MLPRVARLNTHLVSLALLGFQITYG. 2 N-linked (GlcNAc...) asparagine glycosylation sites follow: N99 and N114. Position 127 is a tele-8alpha-FAD histidine (H127). N-linked (GlcNAc...) asparagine glycans are attached at residues N173, N199, N275, N342, N399, and N507. H535 acts as the Proton acceptor in catalysis. A glycan (N-linked (GlcNAc...) asparagine) is linked at N546. H579 is a catalytic residue.

It belongs to the GMC oxidoreductase family. As to quaternary structure, monomer. FAD is required as a cofactor. In terms of processing, N-glycosylated.

It is found in the secreted. The catalysed reaction is pyranose + acceptor = pyranos-2-ulose + reduced acceptor.. It carries out the reaction pyranose + acceptor = pyranos-3-ulose + reduced acceptor.. The enzyme catalyses pyranose + acceptor = pyranos-2,3-diulose + reduced acceptor.. It catalyses the reaction a pyranoside + acceptor = a pyranosid-3-ulose + reduced acceptor.. The catalysed reaction is a pyranoside + acceptor = a pyranosid-3,4-diulose + reduced acceptor.. Its function is as follows. Catalyzes the single-oxidation or sequential double oxidation reaction of carbohydrates primarily at carbon-2 and/or carbon-3 with the concomitant reduction of the flavin. The enzyme exhibits a broad sugar substrate specificity, oxidizing different aldopyranoses to the corresponding C-1, C-2, C-3 or C-1,2, C-2,3 and C-3,4 (di)dehydro sugars with substrate-specific regioselectivity. Accepts only a narrow range of electron acceptors such as substituted benzoquinones and complexed metal ions and reacts extremely slowly with O(2) as acceptor. May play a role in the natural recycling of plant matter by oxidizing all major monosaccharides in lignocellulose and by reducing quinone compounds or reactive radical species generated during lignin depolymerization. The protein is Pyranose dehydrogenase 3 of Leucoagaricus meleagris (Western flat-topped agaric).